Here is a 507-residue protein sequence, read N- to C-terminus: Arabinose import ATP-binding protein AraG (507 aa).

ABC transporter domains are found at residues 14-249 (LRFN…MVGR) and 249-505 (RDIQ…LPRT). 46–53 (GENGAGKS) serves as a coordination point for ATP.

This sequence belongs to the ABC transporter superfamily. Arabinose importer (TC 3.A.1.2.2) family. The complex is composed of two ATP-binding proteins (AraG), two transmembrane proteins (AraH) and a solute-binding protein (AraF).

Its subcellular location is the cell inner membrane. The catalysed reaction is L-arabinose(out) + ATP + H2O = L-arabinose(in) + ADP + phosphate + H(+). Its function is as follows. Part of the ABC transporter complex AraFGH involved in arabinose import. Responsible for energy coupling to the transport system. This chain is Arabinose import ATP-binding protein AraG, found in Pseudomonas syringae pv. syringae (strain B728a).